The primary structure comprises 274 residues: Putative phosphoenolpyruvate synthase regulatory protein (274 aa).

154-161 contributes to the ADP binding site; that stretch reads GVSRCGKT.

Belongs to the pyruvate, phosphate/water dikinase regulatory protein family. PSRP subfamily.

The enzyme catalyses [pyruvate, water dikinase] + ADP = [pyruvate, water dikinase]-phosphate + AMP + H(+). It carries out the reaction [pyruvate, water dikinase]-phosphate + phosphate + H(+) = [pyruvate, water dikinase] + diphosphate. Functionally, bifunctional serine/threonine kinase and phosphorylase involved in the regulation of the phosphoenolpyruvate synthase (PEPS) by catalyzing its phosphorylation/dephosphorylation. The chain is Putative phosphoenolpyruvate synthase regulatory protein from Pseudomonas aeruginosa (strain LESB58).